We begin with the raw amino-acid sequence, 198 residues long: Recombination protein RecR (198 aa).

The C4-type zinc finger occupies 57–72 (CSICGNITEEDPCEIC). One can recognise a Toprim domain in the interval 80–175 (SIILVVEEPK…TVTRLAHGLS (96 aa)).

It belongs to the RecR family.

May play a role in DNA repair. It seems to be involved in an RecBC-independent recombinational process of DNA repair. It may act with RecF and RecO. The sequence is that of Recombination protein RecR from Enterococcus faecalis (strain ATCC 700802 / V583).